A 606-amino-acid chain; its full sequence is Glucose methanol choline oxidoreductase atC (606 aa).

Positions 1–19 are cleaved as a signal peptide; that stretch reads MRVFPTYIAVSGLFGGAFA. 8 N-linked (GlcNAc...) asparagine glycosylation sites follow: Asn43, Asn69, Asn87, Asn290, Asn368, Asn418, Asn421, and Asn552.

The protein belongs to the GMC oxidoreductase family.

It carries out the reaction terremutin + A = terreate + AH2. The protein operates within secondary metabolite biosynthesis. Its function is as follows. Glucose methanol choline oxidoreductase; part of the gene cluster that mediates the biosynthesis of terreic acid, a quinone epoxide inhibitor of Bruton's tyrosine kinase. The first step of the pathway is the synthesis of 6-methylsalicylic acid (6-MSA) by the 6-methylsalicylic acid synthase atX. In the biosynthesis of 6-MSA, atX utilizes one acetyl-CoA and three malonyl-CoAs as its substrates and catalyzes a series of programmed reactions including Claisen condensation, reduction, aldol cyclization, and the hydrolytic cleavage that yields 6-MSA. The 6-methylsalicylate 1-monooxygenase atA then catalyzes the decarboxylative hydroxylation of 6-MSA to 3-methylcatechol. The next step is the conversion of 3-methylcatechol to 3-methyl-1,2,4-benzenetriol by cytochrome P450 monooxygenase atE, which is enhanced by cytochrome P450 monooxygenase atG. Then, the epoxidase atD catalyzes the epoxidation and hydroxyl oxidation of 3-methyl-1,2,4-benzenetriol to terremutin. Lastly, GMC oxidoreductase atC oxidizes terremutin to terreic acid. The protein is Glucose methanol choline oxidoreductase atC of Aspergillus terreus (strain NIH 2624 / FGSC A1156).